The sequence spans 345 residues: D-alanine--D-alanine ligase (345 aa).

The 206-residue stretch at 137 to 342 folds into the ATP-grasp domain; that stretch reads KAAFSAAGLP…LEELVHQLLE (206 aa). An ATP-binding site is contributed by 169–224; that stretch reads ETQLGYPCFIKPANLGSSVGISKATNRSELQAGLDLAASHDSRLLVEKGLQVRELE. Mg(2+)-binding residues include Asp-295, Glu-309, and Asn-311.

It belongs to the D-alanine--D-alanine ligase family. Mg(2+) serves as cofactor. Mn(2+) is required as a cofactor.

It is found in the cytoplasm. The enzyme catalyses 2 D-alanine + ATP = D-alanyl-D-alanine + ADP + phosphate + H(+). Its pathway is cell wall biogenesis; peptidoglycan biosynthesis. In terms of biological role, cell wall formation. This Synechococcus sp. (strain RCC307) protein is D-alanine--D-alanine ligase.